A 155-amino-acid polypeptide reads, in one-letter code: Large ribosomal subunit protein uL22 (155 aa).

This sequence belongs to the universal ribosomal protein uL22 family. In terms of assembly, part of the 50S ribosomal subunit.

Its function is as follows. This protein binds specifically to 23S rRNA. It makes multiple contacts with different domains of the 23S rRNA in the assembled 50S subunit and ribosome. In terms of biological role, the globular domain of the protein is located near the polypeptide exit tunnel on the outside of the subunit, while an extended beta-hairpin is found that lines the wall of the exit tunnel in the center of the 70S ribosome. In Archaeoglobus fulgidus (strain ATCC 49558 / DSM 4304 / JCM 9628 / NBRC 100126 / VC-16), this protein is Large ribosomal subunit protein uL22.